Reading from the N-terminus, the 930-residue chain is Zn(2)-C6 fungal-type transcription factor FTF1c (930 aa).

The segment at residues Cys137 to Cys164 is a DNA-binding region (zn(2)-C6 fungal-type).

Its subcellular location is the nucleus. Functionally, zn(2)-C6 fungal-type transcription factor that has a role in the establishment of the fungus within the plant and/or the progress of the disease. Regulates the expression of virulence factors such as SIX1 and SIX6. The chain is Zn(2)-C6 fungal-type transcription factor FTF1c from Fusarium oxysporum f. sp. lycopersici (strain 4287 / CBS 123668 / FGSC 9935 / NRRL 34936) (Fusarium vascular wilt of tomato).